Reading from the N-terminus, the 576-residue chain is Peroxisomal targeting signal receptor (576 aa).

Residue C10 forms a Glycyl cysteine thioester (Cys-Gly) (interchain with G-Cter in ubiquitin) linkage. An amphipathic helix 1 (AH1) region spans residues 11–33; that stretch reads AAGSNPLAQFTKHTQHDTSLQQS. K22 is covalently cross-linked (Glycyl lysine isopeptide (Lys-Gly) (interchain with G-Cter in ubiquitin)). The tract at residues 58–75 is amphipathic helix 2 (AH2); that stretch reads RQQMDQFMQQQNNPAFNF. Short sequence motifs (wxxxF/Y motif) lie at residues 100-104 and 128-132; these read WNQEF and WAQDF. Residues 176–195 are disordered; the sequence is AQMQQQNPAQAQTSEQSQTQ. The WxxxF/Y motif 3 motif lies at 196-200; sequence WEDQF. The amphipathic helix 4 (AH4) stretch occupies residues 224-240; it reads FEQVWDDIQVSYADVEL. The WxxxF/Y motif 4 signature appears at 249 to 253; sequence WEKDF. TPR repeat units follow at residues 278-311, 312-345, 346-383, 384-421, 422-455, 456-489, and 490-523; these read PDAYEIGMRLMESGAKLSEAGLAFEAAVQQDPKH, VDAWLKLGEVQTQNEKESDGIAALEKCLELDPTN, LAALMTLAISYINDGYDNAAYATLERWIETKYPDIASR, ARSSNPDLDGGDRIEQNKRVTELFMKAAQLSPDVASMD, ADVQTGLGVLFYSMEEFDKTIDCFKAAIEVEPDK, ALNWNRLGAALANYNKPEEAVEAYSRALQLNPNF, and VRARYNLGVSFINMGRYKEAVEHLLTGISLHEVE.

Belongs to the peroxisomal targeting signal receptor family. In terms of assembly, interacts (via WxxxF/Y and LVxEF motifs) with PEX14; promoting translocation through the PEX13-PEX14 docking complex. Interacts with PEX8. Post-translationally, a disulfide bond is created between Cys-10 and Cys-338 or Cys-444. In terms of processing, monoubiquitinated at Cys-10 by PEX2 during PEX5 passage through the retrotranslocation channel: monoubiquitination acts as a signal for PEX5 extraction and is required for proper export from peroxisomes and recycling. When PEX5 recycling is compromised, polyubiquitinated at Lys-22 by PEX10 during its passage through the retrotranslocation channel, leading to its degradation.

Its subcellular location is the peroxisome membrane. It is found in the cytoplasm. The protein resides in the cytosol. It localises to the peroxisome matrix. In terms of biological role, receptor that mediates peroxisomal import of proteins containing a C-terminal PTS1-type tripeptide peroxisomal targeting signal (SKL-type). Binds to cargo proteins containing a PTS1 peroxisomal targeting signal in the cytosol, and translocates them into the peroxisome matrix by passing through the peroxisomal docking complex along with cargo proteins. PEX5 receptor is then retrotranslocated into the cytosol, leading to release of bound cargo in the peroxisome matrix, and reset for a subsequent peroxisome import cycle. Required for PEX7 ubiquitination. This chain is Peroxisomal targeting signal receptor, found in Komagataella phaffii (strain GS115 / ATCC 20864) (Yeast).